Reading from the N-terminus, the 20-residue chain is Elongation factor Tu (20 aa).

It belongs to the GTP-binding elongation factor family. EF-Tu/EF-1A subfamily. As to quaternary structure, monomer.

It localises to the cytoplasm. Its function is as follows. This protein promotes the GTP-dependent binding of aminoacyl-tRNA to the A-site of ribosomes during protein biosynthesis. This is Elongation factor Tu (tuf) from Mycoplasmopsis synoviae (Mycoplasma synoviae).